The primary structure comprises 371 residues: Phosphate acyltransferase (371 aa).

Belongs to the PlsX family. In terms of assembly, homodimer. Probably interacts with PlsY.

Its subcellular location is the cytoplasm. The enzyme catalyses a fatty acyl-[ACP] + phosphate = an acyl phosphate + holo-[ACP]. The protein operates within lipid metabolism; phospholipid metabolism. Its function is as follows. Catalyzes the reversible formation of acyl-phosphate (acyl-PO(4)) from acyl-[acyl-carrier-protein] (acyl-ACP). This enzyme utilizes acyl-ACP as fatty acyl donor, but not acyl-CoA. This Ruegeria pomeroyi (strain ATCC 700808 / DSM 15171 / DSS-3) (Silicibacter pomeroyi) protein is Phosphate acyltransferase.